The primary structure comprises 306 residues: Aspartate carbamoyltransferase catalytic subunit (306 aa).

The carbamoyl phosphate site is built by Arg-54 and Thr-55. Position 83 (Lys-83) interacts with L-aspartate. Arg-104, His-132, and Gln-135 together coordinate carbamoyl phosphate. Residues Arg-165 and Arg-227 each contribute to the L-aspartate site. Carbamoyl phosphate contacts are provided by Leu-266 and Pro-267.

This sequence belongs to the aspartate/ornithine carbamoyltransferase superfamily. ATCase family. Heterododecamer (2C3:3R2) of six catalytic PyrB chains organized as two trimers (C3), and six regulatory PyrI chains organized as three dimers (R2).

It catalyses the reaction carbamoyl phosphate + L-aspartate = N-carbamoyl-L-aspartate + phosphate + H(+). The protein operates within pyrimidine metabolism; UMP biosynthesis via de novo pathway; (S)-dihydroorotate from bicarbonate: step 2/3. In terms of biological role, catalyzes the condensation of carbamoyl phosphate and aspartate to form carbamoyl aspartate and inorganic phosphate, the committed step in the de novo pyrimidine nucleotide biosynthesis pathway. This is Aspartate carbamoyltransferase catalytic subunit from Clostridium kluyveri (strain NBRC 12016).